The primary structure comprises 422 residues: UDP-N-acetylglucosamine 1-carboxyvinyltransferase (422 aa).

Residue 22–23 (KN) coordinates phosphoenolpyruvate. Arg94 provides a ligand contact to UDP-N-acetyl-alpha-D-glucosamine. Cys118 acts as the Proton donor in catalysis. Cys118 is subject to 2-(S-cysteinyl)pyruvic acid O-phosphothioketal. Residues 123–127 (RPVDL), Asp308, and Ile330 contribute to the UDP-N-acetyl-alpha-D-glucosamine site.

It belongs to the EPSP synthase family. MurA subfamily.

The protein resides in the cytoplasm. The enzyme catalyses phosphoenolpyruvate + UDP-N-acetyl-alpha-D-glucosamine = UDP-N-acetyl-3-O-(1-carboxyvinyl)-alpha-D-glucosamine + phosphate. Its pathway is cell wall biogenesis; peptidoglycan biosynthesis. In terms of biological role, cell wall formation. Adds enolpyruvyl to UDP-N-acetylglucosamine. The sequence is that of UDP-N-acetylglucosamine 1-carboxyvinyltransferase from Dinoroseobacter shibae (strain DSM 16493 / NCIMB 14021 / DFL 12).